The chain runs to 598 residues: Probable translation initiation factor IF-2 (598 aa).

The region spanning 3–223 (LRCPIVSVLG…ISGLAQRFME (221 aa)) is the tr-type G domain. Residues 12–19 (GHVDHGKT) form a G1 region. 12 to 19 (GHVDHGKT) provides a ligand contact to GTP. Residues 37-41 (GITQH) are G2. Residues 76–79 (DTPG) form a G3 region. GTP contacts are provided by residues 76–80 (DTPGH) and 130–133 (NKID). The tract at residues 130 to 133 (NKID) is G4. Residues 200 to 202 (SAM) form a G5 region.

The protein belongs to the TRAFAC class translation factor GTPase superfamily. Classic translation factor GTPase family. IF-2 subfamily.

Functionally, function in general translation initiation by promoting the binding of the formylmethionine-tRNA to ribosomes. Seems to function along with eIF-2. In Methanococcus aeolicus (strain ATCC BAA-1280 / DSM 17508 / OCM 812 / Nankai-3), this protein is Probable translation initiation factor IF-2.